We begin with the raw amino-acid sequence, 222 residues long: Chromatin-associated protein SWI6 (222 aa).

A compositionally biased stretch (basic and acidic residues) spans 1 to 15 (MPVIKKEELSQKKDL). Disordered regions lie at residues 1-26 (MPVI…GLED) and 77-147 (ETQD…DRQY). The span at 16–26 (ESEEEDSGLED) shows a compositional bias: acidic residues. Positions 28–87 (YEVEKVIKHRGKGKNIEFLVRWKGYGPEYDTWEPTENVASAEEAVAAYWETQDKTATAPR) constitute a Chromo domain.

As to quaternary structure, interacts with DMT5.

It localises to the nucleus. Its function is as follows. Recognizes and binds histone H3 tails methylated at 'Lys-9', leading to epigenetic repression. Localizes DMT5 to heterochromatin characterized by trimethylation of histone H3 tails at 'Lys-9'. This chain is Chromatin-associated protein SWI6, found in Cryptococcus neoformans var. grubii serotype A (strain H99 / ATCC 208821 / CBS 10515 / FGSC 9487) (Filobasidiella neoformans var. grubii).